Reading from the N-terminus, the 258-residue chain is Snake venom serine proteinase 5 (258 aa).

A signal peptide spans 1 to 18 (MVLIRVLANLLILQLSYA). The propeptide occupies 19 to 24 (QKSSEL). Residues 25–249 (VVGGDECNIN…YNDWIQSIIA (225 aa)) form the Peptidase S1 domain. Disulfide bonds link cysteine 31–cysteine 163, cysteine 50–cysteine 66, cysteine 98–cysteine 256, cysteine 142–cysteine 210, cysteine 174–cysteine 189, and cysteine 200–cysteine 225. A glycan (N-linked (GlcNAc...) asparagine) is linked at asparagine 44. Catalysis depends on charge relay system residues histidine 65 and aspartate 110. Serine 204 acts as the Charge relay system in catalysis.

This sequence belongs to the peptidase S1 family. Snake venom subfamily. As to quaternary structure, monomer. As to expression, expressed by the venom gland.

Its subcellular location is the secreted. Functionally, snake venom serine protease that may act in the hemostasis system of the prey. The polypeptide is Snake venom serine proteinase 5 (Crotalus adamanteus (Eastern diamondback rattlesnake)).